The primary structure comprises 174 residues: Crossover junction endodeoxyribonuclease RuvC (174 aa).

Active-site residues include Asp-8, Glu-67, and Asp-139. Residues Asp-8, Glu-67, and Asp-139 each contribute to the Mg(2+) site.

This sequence belongs to the RuvC family. As to quaternary structure, homodimer which binds Holliday junction (HJ) DNA. The HJ becomes 2-fold symmetrical on binding to RuvC with unstacked arms; it has a different conformation from HJ DNA in complex with RuvA. In the full resolvosome a probable DNA-RuvA(4)-RuvB(12)-RuvC(2) complex forms which resolves the HJ. Mg(2+) is required as a cofactor.

It localises to the cytoplasm. It catalyses the reaction Endonucleolytic cleavage at a junction such as a reciprocal single-stranded crossover between two homologous DNA duplexes (Holliday junction).. The RuvA-RuvB-RuvC complex processes Holliday junction (HJ) DNA during genetic recombination and DNA repair. Endonuclease that resolves HJ intermediates. Cleaves cruciform DNA by making single-stranded nicks across the HJ at symmetrical positions within the homologous arms, yielding a 5'-phosphate and a 3'-hydroxyl group; requires a central core of homology in the junction. The consensus cleavage sequence is 5'-(A/T)TT(C/G)-3'. Cleavage occurs on the 3'-side of the TT dinucleotide at the point of strand exchange. HJ branch migration catalyzed by RuvA-RuvB allows RuvC to scan DNA until it finds its consensus sequence, where it cleaves and resolves the cruciform DNA. This is Crossover junction endodeoxyribonuclease RuvC from Pseudomonas putida (strain W619).